Consider the following 146-residue polypeptide: Large ribosomal subunit protein uL16 (146 aa).

It belongs to the universal ribosomal protein uL16 family. Part of the 50S ribosomal subunit.

Binds 23S rRNA and is also seen to make contacts with the A and possibly P site tRNAs. The polypeptide is Large ribosomal subunit protein uL16 (Lactobacillus acidophilus (strain ATCC 700396 / NCK56 / N2 / NCFM)).